A 195-amino-acid polypeptide reads, in one-letter code: Phosphoheptose isomerase (195 aa).

The 160-residue stretch at 36-195 (LVDSLKGDGI…IIEKELFGLD (160 aa)) folds into the SIS domain. 51–53 (NGG) lines the substrate pocket. Zn(2+)-binding residues include His60 and Glu64. Residues Glu64, 95–96 (ND), 121–123 (TTS), Ser126, and Gln173 contribute to the substrate site. Zn(2+) is bound by residues Gln173 and His181.

It belongs to the SIS family. GmhA subfamily. The cofactor is Zn(2+).

It is found in the cytoplasm. It catalyses the reaction 2 D-sedoheptulose 7-phosphate = D-glycero-alpha-D-manno-heptose 7-phosphate + D-glycero-beta-D-manno-heptose 7-phosphate. It functions in the pathway carbohydrate biosynthesis; D-glycero-D-manno-heptose 7-phosphate biosynthesis; D-glycero-alpha-D-manno-heptose 7-phosphate and D-glycero-beta-D-manno-heptose 7-phosphate from sedoheptulose 7-phosphate: step 1/1. In terms of biological role, catalyzes the isomerization of sedoheptulose 7-phosphate in D-glycero-D-manno-heptose 7-phosphate. The protein is Phosphoheptose isomerase of Leptospira biflexa serovar Patoc (strain Patoc 1 / Ames).